Reading from the N-terminus, the 142-residue chain is C-type lectin 13 (142 aa).

Positions 1–23 (MGRLVFVSFGGWDVFLSLSGTGA) are cleaved as a signal peptide. 3 cysteine pairs are disulfide-bonded: Cys25–Cys36, Cys53–Cys138, and Cys115–Cys130. Positions 32 to 139 (YEGHCYRVFQ…CSKTHNVVCK (108 aa)) constitute a C-type lectin domain.

Belongs to the snaclec family. In terms of assembly, heteromultimer; disulfide-linked. Expressed by the venom gland.

The protein localises to the secreted. Interferes with one step of hemostasis (modulation of platelet aggregation, or coagulation cascade, for example). The chain is C-type lectin 13 from Crotalus adamanteus (Eastern diamondback rattlesnake).